The following is a 142-amino-acid chain: Large ribosomal subunit protein uL11 (142 aa).

Belongs to the universal ribosomal protein uL11 family. In terms of assembly, part of the ribosomal stalk of the 50S ribosomal subunit. Interacts with L10 and the large rRNA to form the base of the stalk. L10 forms an elongated spine to which L12 dimers bind in a sequential fashion forming a multimeric L10(L12)X complex. Post-translationally, one or more lysine residues are methylated.

Functionally, forms part of the ribosomal stalk which helps the ribosome interact with GTP-bound translation factors. The chain is Large ribosomal subunit protein uL11 from Bradyrhizobium sp. (strain ORS 278).